Consider the following 93-residue polypeptide: Small ribosomal subunit protein bS16 (93 aa).

It belongs to the bacterial ribosomal protein bS16 family.

The chain is Small ribosomal subunit protein bS16 from Dictyoglomus thermophilum (strain ATCC 35947 / DSM 3960 / H-6-12).